The following is a 411-amino-acid chain: tRNA (guanine(37)-N(1))-methyltransferase (411 aa).

S-adenosyl-L-methionine contacts are provided by residues histidine 216, 254 to 255 (DL), 282 to 283 (DG), and asparagine 303. The interval 391–411 (ERQASKQDDPKRRKVAAENAA) is disordered.

The protein belongs to the class I-like SAM-binding methyltransferase superfamily. TRM5/TYW2 family. In terms of assembly, monomer.

The protein localises to the mitochondrion matrix. The protein resides in the nucleus. It is found in the cytoplasm. The enzyme catalyses guanosine(37) in tRNA + S-adenosyl-L-methionine = N(1)-methylguanosine(37) in tRNA + S-adenosyl-L-homocysteine + H(+). In terms of biological role, specifically methylates the N1 position of guanosine-37 in various cytoplasmic and mitochondrial tRNAs. Methylation is not dependent on the nature of the nucleoside 5' of the target nucleoside. This is the first step in the biosynthesis of wybutosine (yW), a modified base adjacent to the anticodon of tRNAs and required for accurate decoding. The chain is tRNA (guanine(37)-N(1))-methyltransferase from Phytophthora infestans (strain T30-4) (Potato late blight agent).